We begin with the raw amino-acid sequence, 499 residues long: Maturase K (499 aa).

Belongs to the intron maturase 2 family. MatK subfamily.

The protein localises to the plastid. It is found in the chloroplast. Functionally, usually encoded in the trnK tRNA gene intron. Probably assists in splicing its own and other chloroplast group II introns. The chain is Maturase K from Macrozamia communis (Burrawang palm).